The chain runs to 130 residues: uncharacterized protein (130 aa).

The signal sequence occupies residues 1 to 18 (MVEVWWSLIGAAVPALIA).

This is an uncharacterized protein from Arabidopsis thaliana (Mouse-ear cress).